The following is a 476-amino-acid chain: Tubulointerstitial nephritis antigen (476 aa).

The N-linked (GlcNAc...) asparagine glycan is linked to Asn38. Positions 59–107 (NFGCCEDRDDGCVTEFYAANALCYCDKFCDRENSDCCPDYKSFCREEKE) constitute an SMB domain. 6 disulfide bridges follow: Cys63-Cys70, Cys70-Cys102, Cys81-Cys83, Cys81-Cys95, Cys87-Cys94, and Cys95-Cys102. N-linked (GlcNAc...) asparagine glycosylation is found at Asn175, Asn314, Asn360, and Asn455.

This sequence belongs to the peptidase C1 family. It has been suggested that the active SMB domain may be permitted considerable disulfide bond heterogeneity or variability, thus 2 alternate disulfide patterns based on 3D structures are described with 1 disulfide bond conserved in both. Expressed in the kidney cortex, small intestine and cornea.

The protein localises to the secreted. The protein resides in the extracellular space. Its subcellular location is the extracellular matrix. It is found in the basement membrane. Its function is as follows. Mediates adhesion of proximal tubule epithelial cells via integrins alpha3-beta1 and alphaV-beta3. This is a non catalytic peptidase C1 family protein. The sequence is that of Tubulointerstitial nephritis antigen (TINAG) from Homo sapiens (Human).